The following is a 112-amino-acid chain: Small capsomere-interacting protein (112 aa).

It belongs to the herpesviridae small capsomere-interacting protein family. Interacts with the major capsid protein/MCP. Interacts with host TSPAN7; this interaction may be responsible for the presence of TSPAN7 in extracellular virions. Interacts with host MAPRE3 and DYNLT1; these interactions mediate retrograde transport of viral capsids.

It localises to the virion. Its subcellular location is the host nucleus. Participates in the assembly of the infectious particles by decorating the outer surface of the capsid shell and thus forming a layer between the capsid and the tegument. Complexes composed of the major capsid protein and small capsomere-interacting protein/SCP assemble together in the host cytoplasm and are translocated to the nucleus, where they accumulate and participate in capsid assembly. Interaction with host dynein light chains suggests a possible function in the retrogarde transport of incoming viral capsids. This Human herpesvirus 1 (strain 17) (HHV-1) protein is Small capsomere-interacting protein.